We begin with the raw amino-acid sequence, 387 residues long: Lipid-A-disaccharide synthase (387 aa).

The protein belongs to the LpxB family.

The catalysed reaction is 2-N,3-O-bis[(3R)-3-hydroxytetradecanoyl]-alpha-D-glucosaminyl 1-phosphate + UDP-2-N,3-O-bis[(3R)-3-hydroxytetradecanoyl]-alpha-D-glucosamine = lipid A disaccharide (E. coli) + UDP + H(+). The enzyme catalyses a lipid X + a UDP-2-N,3-O-bis[(3R)-3-hydroxyacyl]-alpha-D-glucosamine = a lipid A disaccharide + UDP + H(+). The protein operates within glycolipid biosynthesis; lipid IV(A) biosynthesis; lipid IV(A) from (3R)-3-hydroxytetradecanoyl-[acyl-carrier-protein] and UDP-N-acetyl-alpha-D-glucosamine: step 5/6. In terms of biological role, condensation of UDP-2,3-diacylglucosamine and 2,3-diacylglucosamine-1-phosphate to form lipid A disaccharide, a precursor of lipid A, a phosphorylated glycolipid that anchors the lipopolysaccharide to the outer membrane of the cell. This is Lipid-A-disaccharide synthase from Blochmanniella pennsylvanica (strain BPEN).